The sequence spans 163 residues: Transcription elongation factor GreB (163 aa).

Residues 54 to 76 (GKRRMREIDRRIRFLTKRLEAAV) adopt a coiled-coil conformation.

It belongs to the GreA/GreB family. GreB subfamily.

Necessary for efficient RNA polymerase transcription elongation past template-encoded arresting sites. The arresting sites in DNA have the property of trapping a certain fraction of elongating RNA polymerases that pass through, resulting in locked ternary complexes. Cleavage of the nascent transcript by cleavage factors such as GreA or GreB allows the resumption of elongation from the new 3'terminus. GreB releases sequences of up to 9 nucleotides in length. The polypeptide is Transcription elongation factor GreB (Neisseria meningitidis serogroup A / serotype 4A (strain DSM 15465 / Z2491)).